We begin with the raw amino-acid sequence, 149 residues long: UPF0178 protein VF_0601 (149 aa).

Belongs to the UPF0178 family.

This Aliivibrio fischeri (strain ATCC 700601 / ES114) (Vibrio fischeri) protein is UPF0178 protein VF_0601.